We begin with the raw amino-acid sequence, 341 residues long: S-adenosylmethionine:tRNA ribosyltransferase-isomerase (341 aa).

This sequence belongs to the QueA family. As to quaternary structure, monomer.

The protein resides in the cytoplasm. It carries out the reaction 7-aminomethyl-7-carbaguanosine(34) in tRNA + S-adenosyl-L-methionine = epoxyqueuosine(34) in tRNA + adenine + L-methionine + 2 H(+). The protein operates within tRNA modification; tRNA-queuosine biosynthesis. In terms of biological role, transfers and isomerizes the ribose moiety from AdoMet to the 7-aminomethyl group of 7-deazaguanine (preQ1-tRNA) to give epoxyqueuosine (oQ-tRNA). This chain is S-adenosylmethionine:tRNA ribosyltransferase-isomerase, found in Chlorobium luteolum (strain DSM 273 / BCRC 81028 / 2530) (Pelodictyon luteolum).